The primary structure comprises 88 residues: Small ribosomal subunit protein bS18 (88 aa).

Residues 1 to 22 (MSTKNAKPKKEAQRRPSRKAKV) are disordered.

The protein belongs to the bacterial ribosomal protein bS18 family. In terms of assembly, part of the 30S ribosomal subunit. Forms a tight heterodimer with protein bS6.

Binds as a heterodimer with protein bS6 to the central domain of the 16S rRNA, where it helps stabilize the platform of the 30S subunit. This chain is Small ribosomal subunit protein bS18 (rpsR), found in Thermus thermophilus.